The chain runs to 274 residues: 3-methyl-2-oxobutanoate hydroxymethyltransferase (274 aa).

Residues D44 and D83 each coordinate Mg(2+). 3-methyl-2-oxobutanoate is bound by residues 44-45 (DS), D83, and K113. E115 lines the Mg(2+) pocket. E182 (proton acceptor) is an active-site residue.

The protein belongs to the PanB family. As to quaternary structure, homodecamer; pentamer of dimers. Mg(2+) is required as a cofactor.

It localises to the cytoplasm. The enzyme catalyses 3-methyl-2-oxobutanoate + (6R)-5,10-methylene-5,6,7,8-tetrahydrofolate + H2O = 2-dehydropantoate + (6S)-5,6,7,8-tetrahydrofolate. It participates in cofactor biosynthesis; (R)-pantothenate biosynthesis; (R)-pantoate from 3-methyl-2-oxobutanoate: step 1/2. Functionally, catalyzes the reversible reaction in which hydroxymethyl group from 5,10-methylenetetrahydrofolate is transferred onto alpha-ketoisovalerate to form ketopantoate. This chain is 3-methyl-2-oxobutanoate hydroxymethyltransferase, found in Campylobacter jejuni subsp. jejuni serotype O:23/36 (strain 81-176).